We begin with the raw amino-acid sequence, 256 residues long: Thiazole synthase (256 aa).

Lys95 serves as the catalytic Schiff-base intermediate with DXP. Residues Gly156, Ala182–Gly183, and Asn204–Thr205 contribute to the 1-deoxy-D-xylulose 5-phosphate site.

Belongs to the ThiG family. In terms of assembly, homotetramer. Forms heterodimers with either ThiH or ThiS.

The protein resides in the cytoplasm. The enzyme catalyses [ThiS sulfur-carrier protein]-C-terminal-Gly-aminoethanethioate + 2-iminoacetate + 1-deoxy-D-xylulose 5-phosphate = [ThiS sulfur-carrier protein]-C-terminal Gly-Gly + 2-[(2R,5Z)-2-carboxy-4-methylthiazol-5(2H)-ylidene]ethyl phosphate + 2 H2O + H(+). The protein operates within cofactor biosynthesis; thiamine diphosphate biosynthesis. Its function is as follows. Catalyzes the rearrangement of 1-deoxy-D-xylulose 5-phosphate (DXP) to produce the thiazole phosphate moiety of thiamine. Sulfur is provided by the thiocarboxylate moiety of the carrier protein ThiS. In vitro, sulfur can be provided by H(2)S. In Escherichia coli (strain K12 / MC4100 / BW2952), this protein is Thiazole synthase.